The sequence spans 187 residues: Putative protein YbeM (187 aa).

In terms of domain architecture, CN hydrolase spans 1-163 (MMTTILTIHV…PALIMAEVTP (163 aa)).

It belongs to the carbon-nitrogen hydrolase superfamily. NIT1/NIT2 family.

In terms of biological role, pseudogene resulting from a nucleotide deletion that introduces a premature stop codon at position 66. This is the C-terminal fragment. The intact protein (AC A0A140NCB4) hydrolyzes deaminated glutathione (dGSH, 2-oxoglutaramate) to alpha-ketoglutarate (alpha-KG) and cysteinylglycine, has less activity against alpha-ketoglutaramate (a-KGM) and no activity on glutathione or L-glutamine. May function as a metabolite repair enzyme. The protein is Putative protein YbeM (ybeM) of Escherichia coli (strain K12).